Consider the following 143-residue polypeptide: Probable prefoldin subunit 2 (143 aa).

This sequence belongs to the prefoldin subunit beta family. Heterohexamer of two PFD-alpha type and four PFD-beta type subunits.

Functionally, binds specifically to cytosolic chaperonin (c-CPN) and transfers target proteins to it. Binds to nascent polypeptide chain and promotes folding in an environment in which there are many competing pathways for nonnative proteins. The sequence is that of Probable prefoldin subunit 2 from Drosophila melanogaster (Fruit fly).